The primary structure comprises 294 residues: Phosphoribosylaminoimidazole-succinocarboxamide synthase (294 aa).

The protein belongs to the SAICAR synthetase family.

The catalysed reaction is 5-amino-1-(5-phospho-D-ribosyl)imidazole-4-carboxylate + L-aspartate + ATP = (2S)-2-[5-amino-1-(5-phospho-beta-D-ribosyl)imidazole-4-carboxamido]succinate + ADP + phosphate + 2 H(+). It participates in purine metabolism; IMP biosynthesis via de novo pathway; 5-amino-1-(5-phospho-D-ribosyl)imidazole-4-carboxamide from 5-amino-1-(5-phospho-D-ribosyl)imidazole-4-carboxylate: step 1/2. The sequence is that of Phosphoribosylaminoimidazole-succinocarboxamide synthase from Thermoplasma acidophilum (strain ATCC 25905 / DSM 1728 / JCM 9062 / NBRC 15155 / AMRC-C165).